Reading from the N-terminus, the 726-residue chain is Transcription factor 12 (726 aa).

Disordered stretches follow at residues 27–75 (SPPV…SRGF), 89–223 (LVSH…TFFD), 243–267 (YGGM…HSHD), 289–309 (SSFH…HTPP), 345–367 (PDHT…SPLA), 380–409 (TASG…YENS), 501–532 (MGSV…SSEL), 558–624 (VENQ…ERRM), and 694–726 (EEEK…MGHL). Positions 29 to 47 (PVNSGKNRPTTLGSSQFTA) are enriched in polar residues. A compositionally biased stretch (low complexity) spans 55 to 74 (SQASWASGGQSSPSFESSRG). Composition is skewed to polar residues over residues 145 to 157 (PGKS…SYTG), 249 to 263 (GSSS…YSNL), and 291 to 309 (FHRS…HTPP). Low complexity predominate over residues 348–359 (TSSSFPSNPSTP). Composition is skewed to polar residues over residues 389–409 (GTTQ…YENS) and 510–532 (GSLN…SSEL). Over residues 559-575 (ENQDKDDMHDSHASDDL) the composition is skewed to basic and acidic residues. A compositionally biased stretch (low complexity) spans 592 to 603 (SSRPSCELSCSS). Residues 612-624 (PEQKAERERERRM) show a composition bias toward basic and acidic residues. The 54-residue stretch at 621–674 (ERRMANNARERLRVRDINEAFKELGRMCQLHLKSEKPQTKLLILHQAVAVILSL) folds into the bHLH domain. A class A specific domain region spans residues 676 to 699 (QQVRERNLNPKAACLKRREEEKVS). Residues 717–726 (TDTSNPMGHL) are compositionally biased toward polar residues.

Efficient DNA binding requires dimerization with another bHLH protein.

Its subcellular location is the nucleus. Its function is as follows. Transcriptional regulator. Involved in the initiation of neuronal differentiation. Activates transcription by binding to the E box (5'-CANNTG-3'). May be involved in the functional network that regulates the development of the GnRH axis. The protein is Transcription factor 12 (tcf12) of Danio rerio (Zebrafish).